The primary structure comprises 252 residues: Serine/threonine phosphatase stp (252 aa).

A disordered region spans residues 1-22; the sequence is MHAEFRTDRGRIRHHNEDNGGV. In terms of domain architecture, PPM-type phosphatase spans 2–242; that stretch reads HAEFRTDRGR…DNITVLLVER (241 aa). Asp-36, Gly-37, Asp-194, and Asp-233 together coordinate Mn(2+).

This sequence belongs to the PP2C family. It depends on Mn(2+) as a cofactor.

Its subcellular location is the cytoplasm. The protein localises to the membrane. The enzyme catalyses O-phospho-L-seryl-[protein] + H2O = L-seryl-[protein] + phosphate. It catalyses the reaction O-phospho-L-threonyl-[protein] + H2O = L-threonyl-[protein] + phosphate. Its function is as follows. Protein phosphatase that dephosphorylates EF-Tu. The protein is Serine/threonine phosphatase stp (stp) of Listeria innocua serovar 6a (strain ATCC BAA-680 / CLIP 11262).